The sequence spans 402 residues: MDTRAFKRSLHSSENYHRKGFGHGEEVNQQLQGEYQSSLIQQIRANGYRWQQGDVTIRLAEAFGFCWGVERAVALAYETRTHFPTERIWITNEIIHNPSVNERLRQMAVEFIPVVNGVKDFSGVRPGDVVILPAFGASVQEMQLLNERGCTIVDTTCPWVSKVWHSVEKHKKVSFTSIIHGKYNHEETIATSSFAGTYLIVLNLEEARYVCDYILHGGDRAAFMAKFAKACSPGFDPDRDLVRVGIANQTTMLKGETEQIGKLFERTMIQKYGPDRLNEHFMSFNTICDATQERQDAMLSLVKEPLDLMVVIGGYNSSNTTHLQEIAIEHGIPSYHIDSADRIGPGNRIEHKPLHQNPTVAENWLPDRPITIGITSGASTPDKVVEEVLNKIFALRSVATVS.

Cys-66 serves as a coordination point for [4Fe-4S] cluster. (2E)-4-hydroxy-3-methylbut-2-enyl diphosphate is bound at residue His-96. Position 96 (His-96) interacts with dimethylallyl diphosphate. Isopentenyl diphosphate is bound at residue His-96. Cys-157 contributes to the [4Fe-4S] cluster binding site. (2E)-4-hydroxy-3-methylbut-2-enyl diphosphate is bound at residue His-185. His-185 contributes to the dimethylallyl diphosphate binding site. Isopentenyl diphosphate is bound at residue His-185. Glu-187 acts as the Proton donor in catalysis. (2E)-4-hydroxy-3-methylbut-2-enyl diphosphate is bound at residue Thr-250. Cys-288 contacts [4Fe-4S] cluster. The (2E)-4-hydroxy-3-methylbut-2-enyl diphosphate site is built by Ser-317, Ser-318, Asn-319, and Ser-379. Residues Ser-317, Ser-318, Asn-319, and Ser-379 each contribute to the dimethylallyl diphosphate site. The isopentenyl diphosphate site is built by Ser-317, Ser-318, Asn-319, and Ser-379.

It belongs to the IspH family. [4Fe-4S] cluster is required as a cofactor.

It catalyses the reaction isopentenyl diphosphate + 2 oxidized [2Fe-2S]-[ferredoxin] + H2O = (2E)-4-hydroxy-3-methylbut-2-enyl diphosphate + 2 reduced [2Fe-2S]-[ferredoxin] + 2 H(+). The catalysed reaction is dimethylallyl diphosphate + 2 oxidized [2Fe-2S]-[ferredoxin] + H2O = (2E)-4-hydroxy-3-methylbut-2-enyl diphosphate + 2 reduced [2Fe-2S]-[ferredoxin] + 2 H(+). It participates in isoprenoid biosynthesis; dimethylallyl diphosphate biosynthesis; dimethylallyl diphosphate from (2E)-4-hydroxy-3-methylbutenyl diphosphate: step 1/1. It functions in the pathway isoprenoid biosynthesis; isopentenyl diphosphate biosynthesis via DXP pathway; isopentenyl diphosphate from 1-deoxy-D-xylulose 5-phosphate: step 6/6. In terms of biological role, catalyzes the conversion of 1-hydroxy-2-methyl-2-(E)-butenyl 4-diphosphate (HMBPP) into a mixture of isopentenyl diphosphate (IPP) and dimethylallyl diphosphate (DMAPP). Acts in the terminal step of the DOXP/MEP pathway for isoprenoid precursor biosynthesis. In Thermosynechococcus vestitus (strain NIES-2133 / IAM M-273 / BP-1), this protein is 4-hydroxy-3-methylbut-2-enyl diphosphate reductase.